Consider the following 188-residue polypeptide: Large ribosomal subunit protein eL18 (188 aa).

A disordered region spans residues 147–188; sequence EANKHFGPAPGVPHSHTKAHVRSKGRQFERARGRRTSKGYKK. Composition is skewed to basic residues over residues 161 to 171 and 178 to 188; these read SHTKAHVRSKG and RGRRTSKGYKK.

The protein belongs to the eukaryotic ribosomal protein eL18 family.

The protein resides in the cytoplasm. This is Large ribosomal subunit protein eL18 (RpL18) from Diaphorina citri (Asian citrus psyllid).